The sequence spans 276 residues: Stathmin domain-containing protein 1 (276 aa).

Disordered stretches follow at residues 1-40 (MGCG…ENCS), 61-106 (VQMG…RERQ), and 226-250 (GFEP…ATLI). Residue Gly2 is the site of N-myristoyl glycine attachment. 2 stretches are compositionally biased toward polar residues: residues 68 to 78 (GTISENSPSPS) and 87 to 100 (DLVT…PQSL). An SLD domain is found at 118-244 (QGIIQSHSKV…GKPLKRKKSK (127 aa)).

The sequence is that of Stathmin domain-containing protein 1 (STMND1) from Homo sapiens (Human).